The chain runs to 218 residues: Hypoxanthine-guanine phosphoribosyltransferase (218 aa).

Ala-2 bears the N-acetylalanine mark. Lys-69 is a GMP binding site. N6-acetyllysine is present on Lys-103. Lys-115 participates in a covalent cross-link: Glycyl lysine isopeptide (Lys-Gly) (interchain with G-Cter in SUMO1); alternate. Residue Lys-115 forms a Glycyl lysine isopeptide (Lys-Gly) (interchain with G-Cter in SUMO2); alternate linkage. GMP-binding positions include 134–142 (EDIIDTGKT), Lys-166, 186–188 (KFV), and Asp-194. Catalysis depends on Asp-138, which acts as the Proton acceptor. Thr-142 carries the phosphothreonine modification. Position 194 (Asp-194) interacts with Mg(2+).

The protein belongs to the purine/pyrimidine phosphoribosyltransferase family. Homotetramer. It depends on Mg(2+) as a cofactor.

It localises to the cytoplasm. The catalysed reaction is IMP + diphosphate = hypoxanthine + 5-phospho-alpha-D-ribose 1-diphosphate. The enzyme catalyses GMP + diphosphate = guanine + 5-phospho-alpha-D-ribose 1-diphosphate. Its pathway is purine metabolism; IMP biosynthesis via salvage pathway; IMP from hypoxanthine: step 1/1. In terms of biological role, converts guanine to guanosine monophosphate, and hypoxanthine to inosine monophosphate. Transfers the 5-phosphoribosyl group from 5-phosphoribosylpyrophosphate onto the purine. Plays a central role in the generation of purine nucleotides through the purine salvage pathway. This chain is Hypoxanthine-guanine phosphoribosyltransferase (HPRT1), found in Bos taurus (Bovine).